A 469-amino-acid chain; its full sequence is 3-isopropylmalate dehydratase large subunit (469 aa).

[4Fe-4S] cluster contacts are provided by Cys347, Cys408, and Cys411.

Belongs to the aconitase/IPM isomerase family. LeuC type 1 subfamily. Heterodimer of LeuC and LeuD. [4Fe-4S] cluster is required as a cofactor.

It carries out the reaction (2R,3S)-3-isopropylmalate = (2S)-2-isopropylmalate. It participates in amino-acid biosynthesis; L-leucine biosynthesis; L-leucine from 3-methyl-2-oxobutanoate: step 2/4. Its function is as follows. Catalyzes the isomerization between 2-isopropylmalate and 3-isopropylmalate, via the formation of 2-isopropylmaleate. This is 3-isopropylmalate dehydratase large subunit from Actinobacillus pleuropneumoniae serotype 7 (strain AP76).